A 47-amino-acid polypeptide reads, in one-letter code: Potassium channel toxin TcoKIK (47 aa).

The BetaSPN-type CS-alpha/beta domain occupies 14–47 (EYACPAIDKFCEDHCAAKKAVGKCDDFKCNCIKL). 3 disulfides stabilise this stretch: Cys17/Cys37, Cys24/Cys42, and Cys28/Cys44.

Belongs to the long chain scorpion toxin family. Class 2 subfamily. As to expression, expressed by the venom gland.

It localises to the secreted. Its subcellular location is the target cell membrane. Blocks voltage-gated potassium channels. Its application (10 uM) to cells recombinantly expressing channels results in membrane damage and cell lysis. This Tityus costatus (Brazilian scorpion) protein is Potassium channel toxin TcoKIK.